A 153-amino-acid polypeptide reads, in one-letter code: Lysine-acyltransferase RtxC (153 aa).

The active site involves His32.

This sequence belongs to the RTX toxin acyltransferase family.

It is found in the cytoplasm. The catalysed reaction is a fatty acyl-[ACP] + L-lysyl-[protein] = N(6)-(fatty acyl)-L-lysyl-[protein] + holo-[ACP] + H(+). Catalyzes fatty acylation of the protoxin (RtxA) at internal lysine residues, thereby converting it to the active toxin. This is Lysine-acyltransferase RtxC (rtxC) from Vibrio cholerae serotype O1 (strain ATCC 39315 / El Tor Inaba N16961).